A 136-amino-acid polypeptide reads, in one-letter code: uncharacterized protein (136 aa).

The chain crosses the membrane as a helical span at residues 14–34; it reads ASVFAFFVLFLFCLKIILVLF.

It localises to the membrane. This is an uncharacterized protein from Mycoplasma genitalium (strain ATCC 33530 / DSM 19775 / NCTC 10195 / G37) (Mycoplasmoides genitalium).